A 383-amino-acid chain; its full sequence is MQIDFAPSRQSTLGVEWELALVNARTGELVSVANDVLKGVAANHPDLNEDDEHPHIKRELLLNTVELVTGICETVKDAKEDLSRSLAAVREVTDPMGVEVFCAGSHPFSPPLLQPVTDKERYAKLIERTQWWGRQMVIYGVHVHVGIDHRDKVLPILDGLVNYFPHFQALSASSPYWAGEETGYASQRALMFQQLPTAGLPFQFETWEAYESYVQDMFTTGVIDATSEIRWDIRPVANLGTIEMRICDGLATLEEVGAIAALTQCLVDEFSSILDAGGSIPTMPPWHVQENKWRAARYGMEAIIILDAEGNEQLVTEHLAETVSRLEPVAAKLGCSEELADVLKIIQRGASYQRQRRVAAEHNGDLQAVVMDLVQQMRKGPDA.

It belongs to the glutamate--cysteine ligase type 2 family. YbdK subfamily.

It carries out the reaction L-cysteine + L-glutamate + ATP = gamma-L-glutamyl-L-cysteine + ADP + phosphate + H(+). Functionally, ATP-dependent carboxylate-amine ligase which exhibits weak glutamate--cysteine ligase activity. The protein is Putative glutamate--cysteine ligase 2-2 of Paenarthrobacter aurescens (strain TC1).